Reading from the N-terminus, the 95-residue chain is Small ribosomal subunit protein bS18 (95 aa).

It belongs to the bacterial ribosomal protein bS18 family. Part of the 30S ribosomal subunit. Forms a tight heterodimer with protein bS6.

In terms of biological role, binds as a heterodimer with protein bS6 to the central domain of the 16S rRNA, where it helps stabilize the platform of the 30S subunit. The chain is Small ribosomal subunit protein bS18 from Rickettsia typhi (strain ATCC VR-144 / Wilmington).